Here is a 399-residue protein sequence, read N- to C-terminus: Dual-specificity RNA methyltransferase RlmN (399 aa).

The active-site Proton acceptor is the Glu-122. One can recognise a Radical SAM core domain in the interval 128 to 371 (ETDRGTLCVS…VRTPRGRDIL (244 aa)). A disulfide bridge links Cys-135 with Cys-374. Cys-142, Cys-146, and Cys-149 together coordinate [4Fe-4S] cluster. Residues 200–201 (GE), Ser-232, 254–256 (SLH), and Asn-331 contribute to the S-adenosyl-L-methionine site. Catalysis depends on Cys-374, which acts as the S-methylcysteine intermediate.

The protein belongs to the radical SAM superfamily. RlmN family. [4Fe-4S] cluster is required as a cofactor.

It localises to the cytoplasm. The enzyme catalyses adenosine(2503) in 23S rRNA + 2 reduced [2Fe-2S]-[ferredoxin] + 2 S-adenosyl-L-methionine = 2-methyladenosine(2503) in 23S rRNA + 5'-deoxyadenosine + L-methionine + 2 oxidized [2Fe-2S]-[ferredoxin] + S-adenosyl-L-homocysteine. It carries out the reaction adenosine(37) in tRNA + 2 reduced [2Fe-2S]-[ferredoxin] + 2 S-adenosyl-L-methionine = 2-methyladenosine(37) in tRNA + 5'-deoxyadenosine + L-methionine + 2 oxidized [2Fe-2S]-[ferredoxin] + S-adenosyl-L-homocysteine. Functionally, specifically methylates position 2 of adenine 2503 in 23S rRNA and position 2 of adenine 37 in tRNAs. m2A2503 modification seems to play a crucial role in the proofreading step occurring at the peptidyl transferase center and thus would serve to optimize ribosomal fidelity. The protein is Dual-specificity RNA methyltransferase RlmN of Rhodopseudomonas palustris (strain TIE-1).